Consider the following 211-residue polypeptide: Pyridoxine/pyridoxamine 5'-phosphate oxidase (211 aa).

Substrate contacts are provided by residues 7-10 (RTDY) and Lys-65. FMN-binding positions include 60–65 (RILLIK), 75–76 (FT), Arg-81, and Lys-82. Substrate contacts are provided by Tyr-122, Arg-126, and Ser-130. FMN-binding positions include 139–140 (QS) and Trp-183. 189-191 (RLH) lines the substrate pocket. Arg-193 lines the FMN pocket.

It belongs to the pyridoxamine 5'-phosphate oxidase family. Homodimer. FMN is required as a cofactor.

The enzyme catalyses pyridoxamine 5'-phosphate + O2 + H2O = pyridoxal 5'-phosphate + H2O2 + NH4(+). It catalyses the reaction pyridoxine 5'-phosphate + O2 = pyridoxal 5'-phosphate + H2O2. It participates in cofactor metabolism; pyridoxal 5'-phosphate salvage; pyridoxal 5'-phosphate from pyridoxamine 5'-phosphate: step 1/1. Its pathway is cofactor metabolism; pyridoxal 5'-phosphate salvage; pyridoxal 5'-phosphate from pyridoxine 5'-phosphate: step 1/1. Its function is as follows. Catalyzes the oxidation of either pyridoxine 5'-phosphate (PNP) or pyridoxamine 5'-phosphate (PMP) into pyridoxal 5'-phosphate (PLP). This is Pyridoxine/pyridoxamine 5'-phosphate oxidase from Janthinobacterium sp. (strain Marseille) (Minibacterium massiliensis).